A 551-amino-acid chain; its full sequence is Oleuropein beta-glucosidase (551 aa).

Residues 1-27 show a composition bias toward polar residues; that stretch reads MDIQSNVLTITSGSTPTDTSSNGQAAK. Positions 1-33 are disordered; that stretch reads MDIQSNVLTITSGSTPTDTSSNGQAAKSTKERI. A beta-D-glucoside-binding positions include Gln52, His156, 201 to 202, Tyr363, Glu433, Trp482, 489 to 490, and Phe498; these read NE and EW. Glu202 functions as the Proton donor in the catalytic mechanism. Catalysis depends on Glu433, which acts as the Nucleophile. The segment at 502 to 551 is required for the homomultimerization; it reads YVDYANGRYTRLPKRSAVWWRNFLTKPTAVPLKNEPEKSEDRRKRLRGST. A disordered region spans residues 532 to 551; it reads PLKNEPEKSEDRRKRLRGST. Residues 535–544 are compositionally biased toward basic and acidic residues; the sequence is NEPEKSEDRR. Positions 542-550 match the Nuclear localization signal motif; sequence DRRKRLRGS.

Belongs to the glycosyl hydrolase 1 family. As to quaternary structure, homomultimer. Native form of the enzyme requires at least an octamer conformation. In terms of tissue distribution, expressed in expanding leaves and in young drupes, mostly in the developing seed coat tissues, the perisperm and the mesocarp. Also detected in shoot and root meristems, flower buds, developing ovaries and tapetal cells of the anther. Not detected in embryos or endosperm, or in leaf trichomes.

The protein localises to the nucleus. It catalyses the reaction oleuropein + H2O = oleuropein aglycone + D-glucose. Major beta-glucosidase activating oleuropein into a potent protein cross-linking agent. No activity with rutin, luteolin or p-nitrophenyl-beta-glucopyranoside as substrates. The protein is Oleuropein beta-glucosidase of Olea europaea (Common olive).